A 672-amino-acid polypeptide reads, in one-letter code: Cytadherence high molecular weight protein 3 (672 aa).

Repeat copies occupy residues 98 to 100 (YDQ), 106 to 108 (YDQ), 160 to 162 (PVV), 197 to 199 (YDQ), 206 to 208 (YDQ), 211 to 213 (YDQ), 221 to 223 (YDQ), 226 to 228 (YDQ), 235 to 237 (YDQ), 249 to 251 (YDQ), 288 to 290 (PVV), 310 to 319 (VEPTPTPVVE), 312 to 315 (PTPT), 316 to 318 (PVV), 322 to 324 (PVV), 330 to 339 (VEPTPTPVVE), 332 to 335 (PTPT), 336 to 338 (PVV), 354 to 358 (PQPTP), 385 to 389 (PTPVP), 396 to 400 (PQPTP), 402 to 404 (PVV), 413 to 415 (PVV), 424 to 428 (PTPAP), and 454 to 456 (PVV). The tract at residues 98-251 (YDQVNNTFYD…NAYNTQNYDQ (154 aa)) is 9 X 3 AA repeats OF Y-D-Q. Residues 160–456 (PVVDPDATPE…QTTPAVPPVV (297 aa)) are 8 X 3 AA repeats of P-V-V. A disordered region spans residues 177–197 (GLDPLPQAPDEYQDTTAPPAY). The segment at 310 to 339 (VEPTPTPVVETAPVVEAPKVVEPTPTPVVE) is 2 X 10 AA repeats of V-E-P-T-P-T-P-V-V-E. The segment at 312–428 (PTPTPVVETA…PKVVTPTPAP (117 aa)) is 6 X 5 AA repeats of P-X-P-X-P.

It is found in the cell projection. Its subcellular location is the attachment organelle membrane. Its function is as follows. Component of the cytoskeleton-like structure which stabilizes the shape of the wall-less mycoplasma. This cytoskeleton-like network of accessory proteins containing HMW proteins 1 to 5 allows the proper anchoring of cytadhesin proteins in the mycoplasmal membrane at the attachment organelle. Essential for successful surface parasitism. This is Cytadherence high molecular weight protein 3 (hmw3) from Mycoplasma pneumoniae (strain ATCC 29342 / M129 / Subtype 1) (Mycoplasmoides pneumoniae).